A 149-amino-acid chain; its full sequence is Small ribosomal subunit protein uS13 (149 aa).

A disordered region spans residues 118-149 (GRRHELGLPVRGQRTKSTFRKGSSVGVRRKKR).

Belongs to the universal ribosomal protein uS13 family. As to quaternary structure, part of the 30S ribosomal subunit. Forms a loose heterodimer with protein S19. Forms two bridges to the 50S subunit in the 70S ribosome.

Located at the top of the head of the 30S subunit, it contacts several helices of the 16S rRNA. In the 70S ribosome it contacts the 23S rRNA (bridge B1a) and protein L5 of the 50S subunit (bridge B1b), connecting the 2 subunits; these bridges are implicated in subunit movement. In Methanothermobacter thermautotrophicus (strain ATCC 29096 / DSM 1053 / JCM 10044 / NBRC 100330 / Delta H) (Methanobacterium thermoautotrophicum), this protein is Small ribosomal subunit protein uS13.